We begin with the raw amino-acid sequence, 95 residues long: Small ribosomal subunit protein bS6 (95 aa).

It belongs to the bacterial ribosomal protein bS6 family.

Functionally, binds together with bS18 to 16S ribosomal RNA. The protein is Small ribosomal subunit protein bS6 of Corynebacterium diphtheriae (strain ATCC 700971 / NCTC 13129 / Biotype gravis).